Reading from the N-terminus, the 347-residue chain is NADH-ubiquinone oxidoreductase chain 2 (347 aa).

11 helical membrane-spanning segments follow: residues 1–21 (MNPL…MMVV), 25–45 (HWLL…PIMM), 59–79 (YLLT…INLM), 96–116 (TLMT…FWVP), 122–142 (IPLT…LSIL), 149–169 (INLH…GWGG), 178–198 (IMAY…LYNP), 200–220 (LTLL…MLFI), 237–257 (MPVI…LPPL), 274–294 (DMLI…YFYM), and 325–345 (LLPT…MLSI).

It belongs to the complex I subunit 2 family. As to quaternary structure, core subunit of respiratory chain NADH dehydrogenase (Complex I) which is composed of 45 different subunits. Interacts with TMEM242.

It is found in the mitochondrion inner membrane. It catalyses the reaction a ubiquinone + NADH + 5 H(+)(in) = a ubiquinol + NAD(+) + 4 H(+)(out). Core subunit of the mitochondrial membrane respiratory chain NADH dehydrogenase (Complex I) which catalyzes electron transfer from NADH through the respiratory chain, using ubiquinone as an electron acceptor. Essential for the catalytic activity and assembly of complex I. The polypeptide is NADH-ubiquinone oxidoreductase chain 2 (Balaenoptera physalus (Fin whale)).